We begin with the raw amino-acid sequence, 277 residues long: Glutamate racemase (277 aa).

Residues 13 to 14 (DS) and 45 to 46 (YG) contribute to the substrate site. Catalysis depends on Cys77, which acts as the Proton donor/acceptor. A substrate-binding site is contributed by 78 to 79 (NT). Residue Cys192 is the Proton donor/acceptor of the active site. Substrate is bound at residue 193–194 (TH).

Belongs to the aspartate/glutamate racemases family.

The catalysed reaction is L-glutamate = D-glutamate. It functions in the pathway cell wall biogenesis; peptidoglycan biosynthesis. In terms of biological role, provides the (R)-glutamate required for cell wall biosynthesis. This is Glutamate racemase from Rhizobium meliloti (strain 1021) (Ensifer meliloti).